The sequence spans 189 residues: Accessory gene regulator protein B (189 aa).

5 consecutive transmembrane segments (helical) span residues 49–69 (IAYI…FYLI), 81–100 (SFWC…LVIV), 110–130 (IILT…ATKK), 143–163 (YYAI…KEPF), and 164–184 (AQFI…IFFI).

It belongs to the AgrB family.

It localises to the cell membrane. In terms of biological role, essential for the production of a quorum sensing system signal molecule, the autoinducing peptide (AIP). This quorum sensing system is responsible for the regulation of the expression of virulence factor genes. Involved in the proteolytic processing of AgrD, the precursor of AIP. The chain is Accessory gene regulator protein B from Staphylococcus aureus (strain COL).